The chain runs to 1241 residues: Plasma membrane calcium-transporting ATPase 4 (1241 aa).

Residues 1–92 (MTNPSDRVLP…NVIPPKKPKT (92 aa)) are Cytoplasmic-facing. At serine 13 the chain carries Phosphoserine. Residues 93–113 (FLELVWEALQDVTLIILEIAA) form a helical membrane-spanning segment. Residues 114–150 (IISLVLSFYRPAGEENELCGQVATTPEDENEAQAGWI) are Extracellular-facing. Residues 151–171 (EGAAILFSVIIVVLVTAFNDW) form a helical membrane-spanning segment. Residues 172 to 356 (SKEKQFRGLQ…KEKSVLQGKL (185 aa)) lie on the Cytoplasmic side of the membrane. Residues 294–318 (EGEKKKKGKKQGVPENRNKAKTQDG) form a disordered region. Serine 328 bears the Phosphoserine mark. Residues 357-376 (TRLAVQIGKAGLLMSALTVF) form a helical membrane-spanning segment. Residues 377–409 (ILILYFVIDNFVINRRPWLPECTPIYIQYFVKF) lie on the Extracellular side of the membrane. Residues 410–427 (FIIGITVLVVAVPEGLPL) traverse the membrane as a helical segment. Over 428–840 (AVTISLAYSV…MWGRNVYDSI (413 aa)) the chain is Cytoplasmic. The active-site 4-aspartylphosphate intermediate is aspartate 465. Aspartate 785 and aspartate 789 together coordinate Mg(2+). The helical transmembrane segment at 841–860 (SKFLQFQLTVNVVAVIVAFT) threads the bilayer. Residues 861-870 (GACITQDSPL) lie on the Extracellular side of the membrane. A helical transmembrane segment spans residues 871–891 (KAVQMLWVNLIMDTFASLALA). The Cytoplasmic segment spans residues 892 to 911 (TEPPTESLLKRRPYGRNKPL). A helical membrane pass occupies residues 912–934 (ISRTMMKNILGHAFYQLIVIFIL). Topologically, residues 935–952 (VFAGEKFFDIDSGRKAPL) are extracellular. A helical membrane pass occupies residues 953 to 974 (HSPPSQHYTIVFNTFVLMQLFN). The Cytoplasmic portion of the chain corresponds to 975–993 (EINSRKIHGEKNVFSGIYR). A helical transmembrane segment spans residues 994-1015 (NIIFCSVVLGTFICQIFIVEFG). Residues 1016 to 1025 (GKPFSCTSLS) lie on the Extracellular side of the membrane. A helical transmembrane segment spans residues 1026–1047 (LSQWLWCLFIGIGELLWGQFIS). Residues 1048-1241 (AIPTRSLKFL…SSLQSLETSV (194 aa)) are Cytoplasmic-facing. The interval 1086–1103 (LRRGQILWFRGLNRIQTQ) is calmodulin-binding subdomain A. A Phosphothreonine; by PKC modification is found at threonine 1102. Residues 1104–1113 (IDVINTFQTG) are calmodulin-binding subdomain B.

Belongs to the cation transport ATPase (P-type) (TC 3.A.3) family. Type IIB subfamily. Interacts with PDZD11. Interacts with SLC35G1 and STIM1. Interacts with calmodulin. In terms of tissue distribution, isoform XB is the most abundant isoform and is expressed ubiquitously. Isoforms containing segment Z have only been detected in heart, while isoforms containing segment a have been found in heart, stomach and brain cortex.

The protein localises to the cell membrane. The protein resides in the cell projection. It is found in the cilium. It localises to the flagellum membrane. The catalysed reaction is Ca(2+)(in) + ATP + H2O = Ca(2+)(out) + ADP + phosphate + H(+). With respect to regulation, activated by calcium/calmodulin. Its function is as follows. Calcium/calmodulin-regulated and magnesium-dependent enzyme that catalyzes the hydrolysis of ATP coupled with the transport of calcium out of the cell. By regulating sperm cell calcium homeostasis, may play a role in sperm motility. The chain is Plasma membrane calcium-transporting ATPase 4 from Homo sapiens (Human).